A 190-amino-acid polypeptide reads, in one-letter code: 7-methyl-GTP pyrophosphatase (190 aa).

The active-site Proton acceptor is the D69.

The protein belongs to the Maf family. YceF subfamily. Requires a divalent metal cation as cofactor.

Its subcellular location is the cytoplasm. It catalyses the reaction N(7)-methyl-GTP + H2O = N(7)-methyl-GMP + diphosphate + H(+). Its function is as follows. Nucleoside triphosphate pyrophosphatase that hydrolyzes 7-methyl-GTP (m(7)GTP). May have a dual role in cell division arrest and in preventing the incorporation of modified nucleotides into cellular nucleic acids. This Xanthomonas oryzae pv. oryzae (strain MAFF 311018) protein is 7-methyl-GTP pyrophosphatase.